The chain runs to 261 residues: MENFSLLSISGPPISSSALSAFPDIMFSRATSLPDIAKTAVPTEASSPAQALPPQYQSIIVRQGIQNTALSPDCSLGDTQHGEKLRRNCTIYRPWFSPYSYFVCADKESQLEAYDFPEVQQDEGKWDNCLSEDMAENICSSSSSPENTCPREATKKSRHGLDSITSQDILMASRWHPAQQNGYKCVACCRMYPTLDFLKSHIKRGFREGFSCKVYYRKLKALWSKEQKARLGDRLSSGSCQAFNSPAEHLRQIGGEAYLCL.

Positions 140-159 (SSSSSPENTCPREATKKSRH) are disordered.

Testis-specific.

The protein localises to the nucleus membrane. Functionally, plays a role in spermiogenesis and fertilization. The protein is Spermatogenesis-associated protein 46 of Homo sapiens (Human).